The sequence spans 408 residues: WD repeat-containing protein JIP5 (408 aa).

WD repeat units follow at residues 5–44 (PVGSQIFDVVFHPSSAIAYTGLLNGHIKAFAYGEQGDSHN), 50–86 (PSKRSCRGLSLNGDGSKLYAVGKSKALHIVDTTTTDI), 87–130 (DARS…SVKT), 133–172 (QHFDYISDFLWLDDKKQLVATSGDGTLSVMDVRAKEPKVV), 177–216 (DQEDDLLSIVAIKSAQKILVGTQLGILSVFNRKKGWGDCV), and 221–267 (GHPL…FLGV). The tract at residues 311–408 (VDSDEEEDDE…VIDKDFFDGL (98 aa)) is disordered. Acidic residues-rich tracts occupy residues 313 to 339 (SDEEEDDEEEWGGIEGADGSEGEEDEE) and 356 to 366 (DESDDEDEEME). A compositionally biased stretch (basic and acidic residues) spans 396 to 408 (KETVIDKDFFDGL).

This sequence belongs to the WD repeat WDR55 family.

The protein localises to the nucleus. Its subcellular location is the nucleolus. The protein is WD repeat-containing protein JIP5 (JIP5) of Coprinopsis cinerea (strain Okayama-7 / 130 / ATCC MYA-4618 / FGSC 9003) (Inky cap fungus).